The sequence spans 340 residues: Putative Ig-like domain-containing protein C1 (340 aa).

Residues 207–294 form the Ig-like domain; that stretch reads PTVTVTGIER…SSPRVMVPTI (88 aa).

The polypeptide is Putative Ig-like domain-containing protein C1 (Sus scrofa (Pig)).